The sequence spans 499 residues: Probable cytosol aminopeptidase (499 aa).

The Mn(2+) site is built by Lys-267 and Asp-272. Residue Lys-279 is part of the active site. Positions 290, 349, and 351 each coordinate Mn(2+). The active site involves Arg-353.

It belongs to the peptidase M17 family. Requires Mn(2+) as cofactor.

The protein localises to the cytoplasm. The catalysed reaction is Release of an N-terminal amino acid, Xaa-|-Yaa-, in which Xaa is preferably Leu, but may be other amino acids including Pro although not Arg or Lys, and Yaa may be Pro. Amino acid amides and methyl esters are also readily hydrolyzed, but rates on arylamides are exceedingly low.. It catalyses the reaction Release of an N-terminal amino acid, preferentially leucine, but not glutamic or aspartic acids.. Presumably involved in the processing and regular turnover of intracellular proteins. Catalyzes the removal of unsubstituted N-terminal amino acids from various peptides. The protein is Probable cytosol aminopeptidase of Buchnera aphidicola subsp. Acyrthosiphon pisum (strain 5A).